A 67-amino-acid chain; its full sequence is Ceratotoxin-C (67 aa).

A signal peptide spans 1–23; the sequence is MANIKAVFLICIVAFIAFHCVVA. The propeptide occupies 24 to 35; sequence EPTAEDSVVVKR.

In terms of assembly, homomer of four to six subunits.

The protein resides in the secreted. Its function is as follows. Female-specific peptides with potent activity against Gram-positive and Gram-negative bacteria. They have as well hemolytic activity. This is Ceratotoxin-C (CTXC1) from Ceratitis capitata (Mediterranean fruit fly).